Reading from the N-terminus, the 189-residue chain is Adenylate kinase (189 aa).

10-15 (GAGKGT) serves as a coordination point for ATP. Residues 30-59 (STGDIFRANVSGGTELGKKAQAYMDRGDLV) form an NMP region. AMP is bound by residues Thr-31, Arg-36, 57–59 (DLV), 85–88 (GFPR), and Gln-92. The segment at 126–136 (ERARIDNRSDD) is LID. Arg-127 serves as a coordination point for ATP. AMP is bound by residues Arg-133 and Arg-144. Gly-172 is an ATP binding site.

Belongs to the adenylate kinase family. Monomer.

The protein resides in the cytoplasm. The catalysed reaction is AMP + ATP = 2 ADP. Its pathway is purine metabolism; AMP biosynthesis via salvage pathway; AMP from ADP: step 1/1. In terms of biological role, catalyzes the reversible transfer of the terminal phosphate group between ATP and AMP. Plays an important role in cellular energy homeostasis and in adenine nucleotide metabolism. This Thermobifida fusca (strain YX) protein is Adenylate kinase.